Here is a 350-residue protein sequence, read N- to C-terminus: tRNA uridine(34) hydroxylase (350 aa).

Residues 146 to 240 enclose the Rhodanese domain; that stretch reads DDPDALFIDM…YARKAREQGL (95 aa). C200 (cysteine persulfide intermediate) is an active-site residue.

Belongs to the TrhO family.

It catalyses the reaction uridine(34) in tRNA + AH2 + O2 = 5-hydroxyuridine(34) in tRNA + A + H2O. In terms of biological role, catalyzes oxygen-dependent 5-hydroxyuridine (ho5U) modification at position 34 in tRNAs, the first step in 5-carboxymethoxyuridine (cmo5U) biosynthesis. May be part of an alternate pathway, which is able to bypass cmo5U biogenesis in a subset of tRNAs under aerobic conditions. This Escherichia coli O45:K1 (strain S88 / ExPEC) protein is tRNA uridine(34) hydroxylase.